The following is a 374-amino-acid chain: Putative F-box protein At3g17480 (374 aa).

The region spanning 6–52 is the F-box domain; that stretch reads SSPMSVLTEDLVEDILSRVPATSLVRLRSTCKQWNAILNDRRFIKKH.

The protein is Putative F-box protein At3g17480 of Arabidopsis thaliana (Mouse-ear cress).